The sequence spans 197 residues: Large ribosomal subunit protein uL18 (197 aa).

It belongs to the universal ribosomal protein uL18 family. In terms of assembly, part of the 50S ribosomal subunit. Contacts the 5S and 23S rRNAs.

Its function is as follows. This is one of the proteins that bind and probably mediate the attachment of the 5S RNA into the large ribosomal subunit, where it forms part of the central protuberance. The polypeptide is Large ribosomal subunit protein uL18 (Sulfolobus acidocaldarius (strain ATCC 33909 / DSM 639 / JCM 8929 / NBRC 15157 / NCIMB 11770)).